The sequence spans 88 residues: UPF0223 protein BH2638 (88 aa).

It belongs to the UPF0223 family.

The protein is UPF0223 protein BH2638 of Halalkalibacterium halodurans (strain ATCC BAA-125 / DSM 18197 / FERM 7344 / JCM 9153 / C-125) (Bacillus halodurans).